The sequence spans 425 residues: Glucan 1,3-beta-glucosidase (425 aa).

The signal sequence occupies residues 1–19 (MNLTLLLLALIFSPSLIFS). Catalysis depends on glutamate 219, which acts as the Proton donor. 2 disulfides stabilise this stretch: cysteine 301–cysteine 423 and cysteine 326–cysteine 352. Catalysis depends on glutamate 318, which acts as the Nucleophile.

Belongs to the glycosyl hydrolase 5 (cellulase A) family.

The protein localises to the secreted. It catalyses the reaction Successive hydrolysis of beta-D-glucose units from the non-reducing ends of (1-&gt;3)-beta-D-glucans, releasing alpha-glucose.. Beta-glucanases participate in the metabolism of beta-glucan, the main structural component of the cell wall. It could also function biosynthetically as a transglycosylase. This chain is Glucan 1,3-beta-glucosidase, found in Schwanniomyces occidentalis (Yeast).